The primary structure comprises 233 residues: 2,3,4,5-tetrahydropyridine-2,6-dicarboxylate N-acetyltransferase (233 aa).

This sequence belongs to the transferase hexapeptide repeat family. DapH subfamily.

It catalyses the reaction (S)-2,3,4,5-tetrahydrodipicolinate + acetyl-CoA + H2O = L-2-acetamido-6-oxoheptanedioate + CoA. It participates in amino-acid biosynthesis; L-lysine biosynthesis via DAP pathway; LL-2,6-diaminopimelate from (S)-tetrahydrodipicolinate (acetylase route): step 1/3. In terms of biological role, catalyzes the transfer of an acetyl group from acetyl-CoA to tetrahydrodipicolinate. This Thermosipho africanus (strain TCF52B) protein is 2,3,4,5-tetrahydropyridine-2,6-dicarboxylate N-acetyltransferase.